The primary structure comprises 124 residues: Astakine (124 aa).

The N-terminal stretch at 1 to 21 (MAVSSAVRMLSVACLVVSAAG) is a signal peptide. 5 disulfides stabilise this stretch: cysteine 28–cysteine 40, cysteine 34–cysteine 52, cysteine 39–cysteine 91, cysteine 62–cysteine 99, and cysteine 93–cysteine 106.

It belongs to the AVIT (prokineticin) family.

The protein resides in the secreted. Its function is as follows. Cytokine directly involved in hematopoiesis. The sequence is that of Astakine from Penaeus monodon (Giant tiger prawn).